The following is a 178-amino-acid chain: MGATKKPDLNDPVLRAKLAKGMGHNYYGEPAWPNDLSYIFPVVILGTIACTIGLAVLEPSMIGEPANPFATPLEILPEWYLFPVFQILRTVPNKLLGVLLMASVPAGSLTVPFLENVNQFQNPFRRPVATTVSLIGTAVALWLGIGAALPIDESLTLGLFQFDPTVEYKNLSIFYSYI.

3 helical membrane-spanning segments follow: residues Leu36–Val56, Leu95–Glu115, and Thr131–Ile151.

The protein belongs to the cytochrome b family. PetD subfamily. In terms of assembly, the 4 large subunits of the cytochrome b6-f complex are cytochrome b6, subunit IV (17 kDa polypeptide, petD), cytochrome f and the Rieske protein, while the 4 small subunits are petG, petL, petM and petN. The complex functions as a dimer.

It localises to the plastid. The protein localises to the chloroplast thylakoid membrane. Component of the cytochrome b6-f complex, which mediates electron transfer between photosystem II (PSII) and photosystem I (PSI), cyclic electron flow around PSI, and state transitions. The polypeptide is Cytochrome b6-f complex subunit 4 (Picea abies (Norway spruce)).